Reading from the N-terminus, the 223-residue chain is Golgi SNAP receptor complex member 1 (223 aa).

The residue at position 2 (Ser-2) is an N-acetylserine. At 2 to 204 (SSQPSFVTIR…MKINTRRKKN (203 aa)) the chain is on the cytoplasmic side. A Phosphoserine modification is found at Ser-164. A helical; Anchor for type IV membrane protein membrane pass occupies residues 205-222 (AFVLATITTLCILFLFFT). Residue Trp-223 is a topological domain, vesicular.

The protein belongs to the GOSR1 family. Component of several multiprotein Golgi SNARE complexes. Identified in a Golgi SNARE complex consisting of t-SNARES SED5, YKT6, and the v-SNARE SFT1. Interacts with BET1. Interacts with BOS1. Interacts with SEC22. Interacts with PEP12. Interacts with self.

The protein resides in the golgi apparatus membrane. Involved in transport from the ER to the Golgi apparatus as well as in intra-Golgi transport. It belongs to a super-family of proteins called t-SNAREs or soluble NSF (N-ethylmaleimide-sensitive factor) attachment protein receptor. Rescues alpha-factor maturation defects. The polypeptide is Golgi SNAP receptor complex member 1 (GOS1) (Saccharomyces cerevisiae (strain ATCC 204508 / S288c) (Baker's yeast)).